A 352-amino-acid polypeptide reads, in one-letter code: Probable RNA methyltransferase CV_2253 (352 aa).

Glu-91 serves as the catalytic Proton acceptor. One can recognise a Radical SAM core domain in the interval 94–320; sequence LLPRDGLCVS…TKVRDSAGQD (227 aa). Cys-101 and Cys-325 are joined by a disulfide. 3 residues coordinate [4Fe-4S] cluster: Cys-108, Cys-112, and Cys-115. Residues 153 to 154, Ser-183, 206 to 208, and Asn-282 contribute to the S-adenosyl-L-methionine site; these read GE and SLH. Catalysis depends on Cys-325, which acts as the S-methylcysteine intermediate.

The protein belongs to the radical SAM superfamily. RlmN family. [4Fe-4S] cluster is required as a cofactor.

Its subcellular location is the cytoplasm. This chain is Probable RNA methyltransferase CV_2253, found in Chromobacterium violaceum (strain ATCC 12472 / DSM 30191 / JCM 1249 / CCUG 213 / NBRC 12614 / NCIMB 9131 / NCTC 9757 / MK).